The primary structure comprises 96 residues: MYKDVDSHQRDSRSDGHQDGFKKNPNFRFFKKKTCKFCDMDRVPDYKEFDFLKKFITEQGKILPRRITGTSAKHQRRLALEIKKARYMALLPFVKQ.

Positions Met-1 to Lys-22 are enriched in basic and acidic residues. Positions Met-1–Pro-25 are disordered.

This sequence belongs to the bacterial ribosomal protein bS18 family. As to quaternary structure, part of the 30S ribosomal subunit. Forms a tight heterodimer with protein bS6.

In terms of biological role, binds as a heterodimer with protein bS6 to the central domain of the 16S rRNA, where it helps stabilize the platform of the 30S subunit. The protein is Small ribosomal subunit protein bS18 of Borrelia hermsii (strain HS1 / DAH).